The sequence spans 172 residues: Ribosome maturation factor RimM (172 aa).

Positions 96–169 constitute a PRC barrel domain; sequence PDEFYDHQLE…AIEIDPPEGL (74 aa).

The protein belongs to the RimM family. In terms of assembly, binds ribosomal protein uS19.

It is found in the cytoplasm. Functionally, an accessory protein needed during the final step in the assembly of 30S ribosomal subunit, possibly for assembly of the head region. Essential for efficient processing of 16S rRNA. May be needed both before and after RbfA during the maturation of 16S rRNA. It has affinity for free ribosomal 30S subunits but not for 70S ribosomes. The polypeptide is Ribosome maturation factor RimM (Mycolicibacterium vanbaalenii (strain DSM 7251 / JCM 13017 / BCRC 16820 / KCTC 9966 / NRRL B-24157 / PYR-1) (Mycobacterium vanbaalenii)).